Reading from the N-terminus, the 199-residue chain is HTH-type transcriptional regulator BetI (199 aa).

Residues 8–68 (EIRKPQLVKA…ETMREILRQL (61 aa)) enclose the HTH tetR-type domain. The H-T-H motif DNA-binding region spans 31 to 50 (SISLISKEAGVSTGIINHYF).

It functions in the pathway amine and polyamine biosynthesis; betaine biosynthesis via choline pathway [regulation]. Repressor involved in the biosynthesis of the osmoprotectant glycine betaine. It represses transcription of the choline transporter BetT and the genes of BetAB involved in the synthesis of glycine betaine. The protein is HTH-type transcriptional regulator BetI of Vibrio parahaemolyticus serotype O3:K6 (strain RIMD 2210633).